The sequence spans 21 residues: Fibrinogen beta chain (21 aa).

The residue at position 1 (Q1) is a Pyrrolidone carboxylic acid. Acidic residues predominate over residues 1-11 (QHSTDYDEVED). Positions 1–21 (QHSTDYDEVEDDRAKLHLDAR) are disordered. T4 carries an O-linked (GalNAc...) threonine glycan. At Y6 the chain carries Sulfotyrosine. Residues 12–21 (DRAKLHLDAR) show a composition bias toward basic and acidic residues.

In terms of assembly, heterohexamer; disulfide linked. Contains 2 sets of 3 non-identical chains (alpha, beta and gamma). The 2 heterotrimers are in head to head conformation with the N-termini in a small central domain. In terms of processing, conversion of fibrinogen to fibrin is triggered by thrombin, which cleaves fibrinopeptides A and B from alpha and beta chains, and thus exposes the N-terminal polymerization sites responsible for the formation of the soft clot.

The protein localises to the secreted. Functionally, cleaved by the protease thrombin to yield monomers which, together with fibrinogen alpha (FGA) and fibrinogen gamma (FGG), polymerize to form an insoluble fibrin matrix. Fibrin has a major function in hemostasis as one of the primary components of blood clots. In addition, functions during the early stages of wound repair to stabilize the lesion and guide cell migration during re-epithelialization. Was originally thought to be essential for platelet aggregation, based on in vitro studies using anticoagulated blood. However subsequent studies have shown that it is not absolutely required for thrombus formation in vivo. Enhances expression of SELP in activated platelets. Maternal fibrinogen is essential for successful pregnancy. Fibrin deposition is also associated with infection, where it protects against IFNG-mediated hemorrhage. May also facilitate the antibacterial immune response via both innate and T-cell mediated pathways. This chain is Fibrinogen beta chain (FGB), found in Muntiacus muntjak (Barking deer).